Reading from the N-terminus, the 684-residue chain is DNA ligase (684 aa).

NAD(+)-binding positions include 34 to 38 (DFQYD), 83 to 84 (SL), and Glu117. The active-site N6-AMP-lysine intermediate is the Lys119. Arg140, Glu186, Lys300, and Lys324 together coordinate NAD(+). Zn(2+) is bound by residues Cys418, Cys421, Cys436, and Cys442. The BRCT domain maps to 601-684 (PVNLNFDGMK…EMLGEVGSNE (84 aa)).

The protein belongs to the NAD-dependent DNA ligase family. LigA subfamily. Requires Mg(2+) as cofactor. Mn(2+) is required as a cofactor.

The enzyme catalyses NAD(+) + (deoxyribonucleotide)n-3'-hydroxyl + 5'-phospho-(deoxyribonucleotide)m = (deoxyribonucleotide)n+m + AMP + beta-nicotinamide D-nucleotide.. In terms of biological role, DNA ligase that catalyzes the formation of phosphodiester linkages between 5'-phosphoryl and 3'-hydroxyl groups in double-stranded DNA using NAD as a coenzyme and as the energy source for the reaction. It is essential for DNA replication and repair of damaged DNA. In Chlorobium phaeobacteroides (strain BS1), this protein is DNA ligase.